The following is a 392-amino-acid chain: Na(+)/H(+) antiporter NhaA (392 aa).

11 helical membrane-spanning segments follow: residues 14-34 (AGGL…NSPL), 59-79 (LLLW…GLEV), 95-115 (IFPA…YLLF), 125-145 (GWAI…ALLG), 154-174 (VFLL…IALF), 179-199 (VSLQ…YMNW), 213-233 (LVLW…GVIV), 254-274 (GLHP…NAGV), 287-307 (LLPL…IFLF), 328-348 (IFAV…IASL), and 363-383 (LGIL…LRLA).

It belongs to the NhaA Na(+)/H(+) (TC 2.A.33) antiporter family.

It localises to the cell inner membrane. The enzyme catalyses Na(+)(in) + 2 H(+)(out) = Na(+)(out) + 2 H(+)(in). In terms of biological role, na(+)/H(+) antiporter that extrudes sodium in exchange for external protons. The chain is Na(+)/H(+) antiporter NhaA from Yersinia enterocolitica serotype O:8 / biotype 1B (strain NCTC 13174 / 8081).